A 428-amino-acid polypeptide reads, in one-letter code: Gamma-glutamyl phosphate reductase (428 aa).

Belongs to the gamma-glutamyl phosphate reductase family.

It localises to the cytoplasm. It catalyses the reaction L-glutamate 5-semialdehyde + phosphate + NADP(+) = L-glutamyl 5-phosphate + NADPH + H(+). It functions in the pathway amino-acid biosynthesis; L-proline biosynthesis; L-glutamate 5-semialdehyde from L-glutamate: step 2/2. Catalyzes the NADPH-dependent reduction of L-glutamate 5-phosphate into L-glutamate 5-semialdehyde and phosphate. The product spontaneously undergoes cyclization to form 1-pyrroline-5-carboxylate. In Anaeromyxobacter sp. (strain Fw109-5), this protein is Gamma-glutamyl phosphate reductase.